The following is a 69-amino-acid chain: MTMRVSADRTVCVGAGLCALTAPGVFDQDDDGIVTVLTAEPAADDDRRTAREAGHLCPSGAVRVVEDTE.

[3Fe-4S] cluster contacts are provided by cysteine 12, cysteine 18, and cysteine 57.

[3Fe-4S] cluster serves as cofactor.

In terms of biological role, electron transport protein for the cytochrome P-450-SU1 system. In Streptomyces griseolus, this protein is Ferredoxin-1 (suaB).